We begin with the raw amino-acid sequence, 174 residues long: Co-chaperone protein HscB homolog (174 aa).

The J domain occupies 2-74 (NYFELFSFTP…ILRAEHMLSL (73 aa)).

This sequence belongs to the HscB family. In terms of assembly, interacts with HscA and stimulates its ATPase activity.

Functionally, co-chaperone involved in the maturation of iron-sulfur cluster-containing proteins. Seems to help targeting proteins to be folded toward HscA. This chain is Co-chaperone protein HscB homolog, found in Shewanella woodyi (strain ATCC 51908 / MS32).